The sequence spans 351 residues: Flagellar P-ring protein (351 aa).

A signal peptide spans 1–20 (MKKILFLFTASLLLHVTLQA).

Belongs to the FlgI family. The basal body constitutes a major portion of the flagellar organelle and consists of four rings (L,P,S, and M) mounted on a central rod.

The protein localises to the periplasm. The protein resides in the bacterial flagellum basal body. Its function is as follows. Assembles around the rod to form the L-ring and probably protects the motor/basal body from shearing forces during rotation. This chain is Flagellar P-ring protein, found in Sulfurimonas denitrificans (strain ATCC 33889 / DSM 1251) (Thiomicrospira denitrificans (strain ATCC 33889 / DSM 1251)).